The following is a 256-amino-acid chain: Ethylene-responsive transcription factor ERF084 (256 aa).

Positions Gly-115–Val-172 form a DNA-binding region, AP2/ERF.

The protein belongs to the AP2/ERF transcription factor family. ERF subfamily.

Its subcellular location is the nucleus. Its function is as follows. Probably acts as a transcriptional activator. Binds to the GCC-box pathogenesis-related promoter element. May be involved in the regulation of gene expression by stress factors and by components of stress signal transduction pathways. This Arabidopsis thaliana (Mouse-ear cress) protein is Ethylene-responsive transcription factor ERF084 (ERF084).